Here is a 563-residue protein sequence, read N- to C-terminus: Inositol-3-phosphate synthase 1-A (563 aa).

It belongs to the myo-inositol 1-phosphate synthase family. It depends on NAD(+) as a cofactor.

Its subcellular location is the cytoplasm. The enzyme catalyses D-glucose 6-phosphate = 1D-myo-inositol 3-phosphate. It participates in polyol metabolism; myo-inositol biosynthesis; myo-inositol from D-glucose 6-phosphate: step 1/2. Its function is as follows. Key enzyme in myo-inositol biosynthesis pathway that catalyzes the conversion of glucose 6-phosphate to 1-myo-inositol 1-phosphate in a NAD-dependent manner. Rate-limiting enzyme in the synthesis of all inositol-containing compounds. The polypeptide is Inositol-3-phosphate synthase 1-A (isyna1-a) (Xenopus laevis (African clawed frog)).